Here is a 137-residue protein sequence, read N- to C-terminus: uncharacterized protein (137 aa).

A helical transmembrane segment spans residues 75 to 91; sequence MFLDAMVILAVASGVSL. The segment at 93-116 is disordered; the sequence is PQLPGRRSHNASTPGAKKPGKDHG.

It is found in the membrane. This is an uncharacterized protein from Saccharomyces cerevisiae (strain ATCC 204508 / S288c) (Baker's yeast).